A 370-amino-acid polypeptide reads, in one-letter code: Peptide chain release factor 1 (370 aa).

At Gln231 the chain carries N5-methylglutamine. Residues 284–293 (AREERERETR) show a composition bias toward basic and acidic residues. Positions 284-303 (AREERERETRAAQVGTGERS) are disordered.

Belongs to the prokaryotic/mitochondrial release factor family. Post-translationally, methylated by PrmC. Methylation increases the termination efficiency of RF1.

The protein resides in the cytoplasm. Functionally, peptide chain release factor 1 directs the termination of translation in response to the peptide chain termination codons UAG and UAA. The protein is Peptide chain release factor 1 of Deinococcus geothermalis (strain DSM 11300 / CIP 105573 / AG-3a).